We begin with the raw amino-acid sequence, 482 residues long: tRNA-2-methylthio-N(6)-dimethylallyladenosine synthase (482 aa).

The region spanning 3–120 (KKLHIKTWGC…LPEMIKQVQG (118 aa)) is the MTTase N-terminal domain. Residues cysteine 12, cysteine 49, cysteine 83, cysteine 158, cysteine 162, and cysteine 165 each coordinate [4Fe-4S] cluster. One can recognise a Radical SAM core domain in the interval 144–376 (KADGPSAFVS…QNRITQMAQQ (233 aa)). The TRAM domain maps to 379–442 (RQMFDTEQRI…PNSLRGDLIR (64 aa)).

It belongs to the methylthiotransferase family. MiaB subfamily. Monomer. It depends on [4Fe-4S] cluster as a cofactor.

It localises to the cytoplasm. It catalyses the reaction N(6)-dimethylallyladenosine(37) in tRNA + (sulfur carrier)-SH + AH2 + 2 S-adenosyl-L-methionine = 2-methylsulfanyl-N(6)-dimethylallyladenosine(37) in tRNA + (sulfur carrier)-H + 5'-deoxyadenosine + L-methionine + A + S-adenosyl-L-homocysteine + 2 H(+). Functionally, catalyzes the methylthiolation of N6-(dimethylallyl)adenosine (i(6)A), leading to the formation of 2-methylthio-N6-(dimethylallyl)adenosine (ms(2)i(6)A) at position 37 in tRNAs that read codons beginning with uridine. This is tRNA-2-methylthio-N(6)-dimethylallyladenosine synthase from Pseudoalteromonas translucida (strain TAC 125).